The following is a 304-amino-acid chain: Putative integrase/recombinase HI_1414 (304 aa).

The Core-binding (CB) domain occupies 30–109; the sequence is TLFSDVIKRY…TIGHIFKIAL (80 aa). One can recognise a Tyr recombinase domain in the interval 131–304; the sequence is PRTQRVTEEN…DMAEVAELLD (174 aa). Active-site residues include arginine 174, lysine 199, histidine 256, arginine 259, and histidine 281. The O-(3'-phospho-DNA)-tyrosine intermediate role is filled by tyrosine 291.

This sequence belongs to the 'phage' integrase family.

In Haemophilus influenzae (strain ATCC 51907 / DSM 11121 / KW20 / Rd), this protein is Putative integrase/recombinase HI_1414.